An 891-amino-acid polypeptide reads, in one-letter code: Fanconi-associated nuclease 1 homolog (891 aa).

Glu-712, Asp-833, Glu-852, and Val-853 together coordinate Mn(2+). The VRR-NUC domain maps to 770–884 (GMAEEILIIS…GFNVEICKVR (115 aa)).

It belongs to the FAN1 family. Requires Mn(2+) as cofactor. Mg(2+) is required as a cofactor.

The protein resides in the nucleus. It catalyses the reaction Hydrolytically removes 5'-nucleotides successively from the 3'-hydroxy termini of 3'-hydroxy-terminated oligonucleotides.. Nuclease required for the repair of DNA interstrand cross-links (ICLs). Acts as a 5'-3' exonuclease that anchors at a cut end of DNA and cleaves DNA successively at every third nucleotide, allowing to excise an ICL from one strand through flanking incisions. May act upstream of the helicase RECQL4A and the ATPase RAD5A, which is involved in error-free post-replicative repair. Functions independently of MUS81 pathway, but in a similar pathway with RECQ4A, RAD5A and MFH1 in ICL repair. The polypeptide is Fanconi-associated nuclease 1 homolog (Arabidopsis thaliana (Mouse-ear cress)).